The following is a 92-amino-acid chain: Small ribosomal subunit protein uS19 (92 aa).

It belongs to the universal ribosomal protein uS19 family.

Functionally, protein S19 forms a complex with S13 that binds strongly to the 16S ribosomal RNA. The sequence is that of Small ribosomal subunit protein uS19 from Rhodopseudomonas palustris (strain HaA2).